Reading from the N-terminus, the 278-residue chain is Orotidine 5'-phosphate decarboxylase (278 aa).

Residues aspartate 40, 62-64, 93-102, tyrosine 228, and arginine 246 contribute to the substrate site; these read KTH and DRKFIDIGNT. Catalysis depends on lysine 95, which acts as the Proton donor.

Belongs to the OMP decarboxylase family.

The catalysed reaction is orotidine 5'-phosphate + H(+) = UMP + CO2. It functions in the pathway pyrimidine metabolism; UMP biosynthesis via de novo pathway; UMP from orotate: step 2/2. The polypeptide is Orotidine 5'-phosphate decarboxylase (PYR1) (Passalora fulva (Tomato leaf mold)).